A 314-amino-acid chain; its full sequence is DNA-directed RNA polymerase subunit alpha (314 aa).

The tract at residues 1–228 (MAQFQIECVE…NLFIPLKDLN (228 aa)) is alpha N-terminal domain (alpha-NTD). Positions 243 to 314 (PESQIPIEEL…ITLPHEKAKA (72 aa)) are alpha C-terminal domain (alpha-CTD).

This sequence belongs to the RNA polymerase alpha chain family. As to quaternary structure, homodimer. In cyanobacteria the RNAP catalytic core is composed of 2 alpha, 1 beta, 1 beta', 1 gamma and 1 omega subunit. When a sigma factor is associated with the core the holoenzyme is formed, which can initiate transcription.

It carries out the reaction RNA(n) + a ribonucleoside 5'-triphosphate = RNA(n+1) + diphosphate. DNA-dependent RNA polymerase catalyzes the transcription of DNA into RNA using the four ribonucleoside triphosphates as substrates. The chain is DNA-directed RNA polymerase subunit alpha from Synechocystis sp. (strain ATCC 27184 / PCC 6803 / Kazusa).